Consider the following 309-residue polypeptide: Malate dehydrogenase (309 aa).

NAD(+)-binding positions include 9–14 (GAGFVG) and Asp33. The substrate site is built by Arg82 and Arg88. NAD(+) is bound by residues Asn95 and 118-120 (VNN). Substrate-binding residues include Asn120 and Arg151. The Proton acceptor role is filled by His175.

The protein belongs to the LDH/MDH superfamily. MDH type 3 family.

The catalysed reaction is (S)-malate + NAD(+) = oxaloacetate + NADH + H(+). In terms of biological role, catalyzes the reversible oxidation of malate to oxaloacetate. The chain is Malate dehydrogenase from Chloroflexus aggregans (strain MD-66 / DSM 9485).